The following is a 444-amino-acid chain: Interferon-induced protein 44 (444 aa).

A TLDc domain is found at methionine 1–glutamate 152.

Belongs to the IFI44 family. In terms of tissue distribution, hepatocytes.

It is found in the cytoplasm. This protein aggregates to form microtubular structures. The polypeptide is Interferon-induced protein 44 (IFI44) (Pan troglodytes (Chimpanzee)).